A 220-amino-acid polypeptide reads, in one-letter code: MSIKEWPEDERPREKLLRQGPATLSDAELLAIFLRTGVNGLSAVDLSRQLLQQFGSLRALLGADQGAFCHAHGLGPAKYAQLQAVLEMGKRHLAEQLQRGDALTSPQLTRDYLQAQLREVFALLLLDNQHRVIQFVELFYGTLDSASVWPREIVQIALKHNAAAVILAHNHPSGVAEPSRADRQITDRILAALALIDIRVLDHLVIGDGITVSFAERGWL.

Residues 95-220 enclose the MPN domain; that stretch reads EQLQRGDALT…TVSFAERGWL (126 aa). Zn(2+)-binding residues include His169, His171, and Asp182. The JAMM motif signature appears at 169–182; the sequence is HNHPSGVAEPSRAD.

Belongs to the UPF0758 family.

The protein is UPF0758 protein ASA_4229 of Aeromonas salmonicida (strain A449).